Here is a 288-residue protein sequence, read N- to C-terminus: UTP--glucose-1-phosphate uridylyltransferase (288 aa).

It belongs to the UDPGP type 2 family.

The enzyme catalyses alpha-D-glucose 1-phosphate + UTP + H(+) = UDP-alpha-D-glucose + diphosphate. It participates in glycolipid metabolism; diglucosyl-diacylglycerol biosynthesis. In terms of biological role, catalyzes the formation of UDP-glucose from glucose-1-phosphate and UTP. This is an intermediate step in the biosynthesis of diglucosyl-diacylglycerol (Glc2-DAG), i.e. the predominant glycolipid found in the S.aureus membrane, which is also used as a membrane anchor for lipoteichoic acid (LTA). This Staphylococcus aureus (strain bovine RF122 / ET3-1) protein is UTP--glucose-1-phosphate uridylyltransferase (gtaB).